The following is a 331-amino-acid chain: Protein mono-ADP-ribosyltransferase PARP11 (331 aa).

Residue lysine 11 is modified to N6-(ADP-ribosyl)lysine. The WWE domain occupies 15-99 (SDVDDMDTSD…VTGKQRLIKR (85 aa)). An ADP-ribosylcysteine mark is found at cysteine 49 and cysteine 65. Aspartate 80 is modified (ADP-ribosyl aspartic acid). The region spanning 116–331 (IPMPTHWENV…IYPEYLIDFH (216 aa)) is the PARP catalytic domain.

It belongs to the ARTD/PARP family. Post-translationally, auto-mono-ADP-ribosylated. In terms of tissue distribution, predominantly expressed in testis, preferentially in postmeiotic germ cells. Also detectable in other tissues, including liver, lung, spleen, thymus and brain.

The protein localises to the nucleus. The protein resides in the nuclear pore complex. The catalysed reaction is L-aspartyl-[protein] + NAD(+) = 4-O-(ADP-D-ribosyl)-L-aspartyl-[protein] + nicotinamide. The enzyme catalyses L-cysteinyl-[protein] + NAD(+) = S-(ADP-D-ribosyl)-L-cysteinyl-[protein] + nicotinamide + H(+). It catalyses the reaction L-glutamyl-[protein] + NAD(+) = 5-O-(ADP-D-ribosyl)-L-glutamyl-[protein] + nicotinamide. It carries out the reaction L-lysyl-[protein] + NAD(+) = N(6)-(ADP-D-ribosyl)-L-lysyl-[protein] + nicotinamide + H(+). In terms of biological role, mono-ADP-ribosyltransferase that mediates mono-ADP-ribosylation of target proteins. Plays a role in nuclear envelope stability and nuclear remodeling during spermiogenesis. Inhibits the type I interferon activated signaling pathway. Mechanistically, mono-ADP-ribosylates beta-TrCP/BTRC to promote IFNAR1 ubiquitination and protect BTRC from ubiquitin-proteasome degradation. This is Protein mono-ADP-ribosyltransferase PARP11 from Mus musculus (Mouse).